The sequence spans 864 residues: Protein translocase subunit SecA (864 aa).

ATP is bound by residues Gln85, Gly103 to Thr107, and Asp542.

The protein belongs to the SecA family. In terms of assembly, monomer and homodimer. Part of the essential Sec protein translocation apparatus which comprises SecA, SecYEG and auxiliary proteins SecDF. Other proteins may also be involved.

The protein resides in the cell inner membrane. The protein localises to the cytoplasm. The enzyme catalyses ATP + H2O + cellular proteinSide 1 = ADP + phosphate + cellular proteinSide 2.. Its function is as follows. Part of the Sec protein translocase complex. Interacts with the SecYEG preprotein conducting channel. Has a central role in coupling the hydrolysis of ATP to the transfer of proteins into and across the cell membrane, serving as an ATP-driven molecular motor driving the stepwise translocation of polypeptide chains across the membrane. This Fervidobacterium nodosum (strain ATCC 35602 / DSM 5306 / Rt17-B1) protein is Protein translocase subunit SecA.